We begin with the raw amino-acid sequence, 466 residues long: ATP synthase subunit beta (466 aa).

Gly148–Thr155 provides a ligand contact to ATP.

This sequence belongs to the ATPase alpha/beta chains family. As to quaternary structure, F-type ATPases have 2 components, CF(1) - the catalytic core - and CF(0) - the membrane proton channel. CF(1) has five subunits: alpha(3), beta(3), gamma(1), delta(1), epsilon(1). CF(0) has three main subunits: a(1), b(2) and c(9-12). The alpha and beta chains form an alternating ring which encloses part of the gamma chain. CF(1) is attached to CF(0) by a central stalk formed by the gamma and epsilon chains, while a peripheral stalk is formed by the delta and b chains.

It is found in the cell inner membrane. It carries out the reaction ATP + H2O + 4 H(+)(in) = ADP + phosphate + 5 H(+)(out). Its function is as follows. Produces ATP from ADP in the presence of a proton gradient across the membrane. The catalytic sites are hosted primarily by the beta subunits. This Xylella fastidiosa (strain M23) protein is ATP synthase subunit beta.